We begin with the raw amino-acid sequence, 67 residues long: Conotoxin VnMMSK-03 (67 aa).

The N-terminal stretch at 1 to 20 (MMSKLGVVLTICLLPFPLTA) is a signal peptide. Residues 21–50 (LPMDGDQPADLPALRTQDFEPERSPWFDPV) constitute a propeptide that is removed on maturation. Intrachain disulfides connect Cys-53-Cys-65, Cys-54-Cys-61, and Cys-58-Cys-64. 4-hydroxyproline is present on Pro-63.

The protein belongs to the conotoxin M superfamily. In terms of tissue distribution, expressed by the venom duct.

Its subcellular location is the secreted. This Conus ventricosus (Mediterranean cone) protein is Conotoxin VnMMSK-03.